We begin with the raw amino-acid sequence, 203 residues long: Holliday junction branch migration complex subunit RuvA (203 aa).

Residues 1-63 (MIVSLRGTVE…EESQTLYGFT (63 aa)) are domain I. The domain II stretch occupies residues 64 to 142 (DDASRRMFVL…GFNDGIPAAA (79 aa)). The tract at residues 143 to 150 (QPQLSIAV) is flexible linker. The domain III stretch occupies residues 150 to 203 (VDQAVQEQVLEALVGLGFSEKIALPVLSRVLRDSPELSKSQALRAALSELGTKN).

It belongs to the RuvA family. As to quaternary structure, homotetramer. Forms an RuvA(8)-RuvB(12)-Holliday junction (HJ) complex. HJ DNA is sandwiched between 2 RuvA tetramers; dsDNA enters through RuvA and exits via RuvB. An RuvB hexamer assembles on each DNA strand where it exits the tetramer. Each RuvB hexamer is contacted by two RuvA subunits (via domain III) on 2 adjacent RuvB subunits; this complex drives branch migration. In the full resolvosome a probable DNA-RuvA(4)-RuvB(12)-RuvC(2) complex forms which resolves the HJ.

Its subcellular location is the cytoplasm. Its function is as follows. The RuvA-RuvB-RuvC complex processes Holliday junction (HJ) DNA during genetic recombination and DNA repair, while the RuvA-RuvB complex plays an important role in the rescue of blocked DNA replication forks via replication fork reversal (RFR). RuvA specifically binds to HJ cruciform DNA, conferring on it an open structure. The RuvB hexamer acts as an ATP-dependent pump, pulling dsDNA into and through the RuvAB complex. HJ branch migration allows RuvC to scan DNA until it finds its consensus sequence, where it cleaves and resolves the cruciform DNA. This is Holliday junction branch migration complex subunit RuvA from Corynebacterium diphtheriae (strain ATCC 700971 / NCTC 13129 / Biotype gravis).